The chain runs to 815 residues: G-type lectin S-receptor-like serine/threonine-protein kinase SD1-1 (815 aa).

The signal sequence occupies residues 1 to 22 (MREIHSLFSLSLFLISSSLSVA). Over 23 to 438 (LDYNVITPKE…FAKIEFKGRE (416 aa)) the chain is Extracellular. Residues 25–152 (YNVITPKEFL…EEAVLWQSFD (128 aa)) enclose the Bulb-type lectin domain. N-linked (GlcNAc...) asparagine glycosylation is found at N93, N249, and N265. The region spanning 288-326 (PEDECDYYSICGAYAVCGINSKNTPSCSCLQGFKPKSGR) is the EGF-like domain. Disulfide bonds link C292-C304 and C298-C314. N-linked (GlcNAc...) asparagine glycosylation is found at N329 and N385. One can recognise a PAN domain in the interval 345–428 (CEKKDAFVKF…FGQDVYIRMG (84 aa)). Intrachain disulfides connect C378–C403 and C382–C388. Residues 439-459 (VVGMVVGSVVAIAVVLVVVFA) form a helical membrane-spanning segment. Topologically, residues 460 to 815 (CFRKKIMKRY…EVSITMLQGR (356 aa)) are cytoplasmic. One can recognise a Protein kinase domain in the interval 500–783 (FSYVNFLGRG…SDSSLPHPTQ (284 aa)). Residues 506-514 (LGRGGFGPV) and K528 each bind ATP. Phosphoserine is present on S534. A caM-binding region spans residues 589–606 (RRSTELDWKKRMNIINGV). D625 functions as the Proton acceptor in the catalytic mechanism. S642 carries the post-translational modification Phosphoserine. T659 carries the phosphothreonine modification. Residues S797 and S803 each carry the phosphoserine modification. A Phosphothreonine modification is found at T810.

This sequence belongs to the protein kinase superfamily. Ser/Thr protein kinase family. As to quaternary structure, interacts with PUB9, PUB13 and PUB14.

It is found in the cell membrane. The enzyme catalyses L-seryl-[protein] + ATP = O-phospho-L-seryl-[protein] + ADP + H(+). The catalysed reaction is L-threonyl-[protein] + ATP = O-phospho-L-threonyl-[protein] + ADP + H(+). This is G-type lectin S-receptor-like serine/threonine-protein kinase SD1-1 (SD11) from Arabidopsis thaliana (Mouse-ear cress).